Here is a 220-residue protein sequence, read N- to C-terminus: MTNAFFLTGTDTEVGKTVASRAILHAAASANIKMAGYKPVASDSTPTDEGMRNSDALYIQDASVVELDYQEVNPYAFEAAISPHLAAEQEGQVIDFDVLSAGLEHLKSKSEAVLIEGAGGWRVPISHTDFLSSWVKREKLPVILVVGVKLGCLSHAILTAEAIKNDGLELVGWVANRINPGTENYADIIKMLEKNLPGKKMGEIPYMPALKNVTYQSILI.

Residue 13–18 participates in ATP binding; sequence EVGKTV. Residue T17 coordinates Mg(2+). Residue K38 is part of the active site. S42 is a binding site for substrate. Residues D55, 116–119, 176–177, and N212 contribute to the ATP site; these read EGAG and NR. Residues D55 and E116 each coordinate Mg(2+).

This sequence belongs to the dethiobiotin synthetase family. In terms of assembly, homodimer. Mg(2+) is required as a cofactor.

It is found in the cytoplasm. The enzyme catalyses (7R,8S)-7,8-diammoniononanoate + CO2 + ATP = (4R,5S)-dethiobiotin + ADP + phosphate + 3 H(+). It participates in cofactor biosynthesis; biotin biosynthesis; biotin from 7,8-diaminononanoate: step 1/2. Catalyzes a mechanistically unusual reaction, the ATP-dependent insertion of CO2 between the N7 and N8 nitrogen atoms of 7,8-diaminopelargonic acid (DAPA, also called 7,8-diammoniononanoate) to form a ureido ring. This Photobacterium profundum (strain SS9) protein is ATP-dependent dethiobiotin synthetase BioD.